The sequence spans 863 residues: ATP-dependent helicase Lhr-Core protein 2 (863 aa).

8 residues coordinate ATP: F30, Q37, K60, T61, D179, E180, R377, and H380. The Helicase ATP-binding domain maps to 41 to 234 (VIEIHKGENV…FVFGFNDDGT (194 aa)). Positions 179–182 (DEVH) match the DEAH box motif. The Helicase C-terminal domain maps to 275–424 (RLDELIEQHR…RIKIPQNPLD (150 aa)). Residues 418 to 512 (IPQNPLDVLV…AIYYMNTGTI (95 aa)) form a WH domain region. The interval 513-863 (PDEAKIEVYT…KIMAMIGELE (351 aa)) is domain 4.

It belongs to the Lhr helicase family. Lhr-Core subfamily. As to quaternary structure, monomer.

It catalyses the reaction ATP + H2O = ADP + phosphate + H(+). With respect to regulation, unwinding of dsRNA duplexes is inhibited by AMP-PMP and ATP-gamma-S. Its function is as follows. A DNA:RNA helicase with a significant strand annealing activity, probably involved in DNA repair and RNA transactions. In vitro has a slow helicase activity with a preference for 3'-overhang duplexes; displaces RNA from 3'-overhang DNA:RNA or RNA:RNA duplexes. 3'-tailed double-stranded (ds)DNA is not unwound. The slow helicase activity on RNA duplexes is ATP-independent. Has strand annealing properties in the absence of ATP; forms 3'-overhang DNA:RNA, 3'-overhang dsRNA and 3'-overhang dsDNA duplexes but not 5'-overhang duplexes. A nucleic acid-dependent ATPase; single-stranded (ss)DNA and RNA are equally stimulatory. Binds ssDNA, RNA, dsDNA and dsRNA duplexes. In Thermococcus barophilus (strain DSM 11836 / MP), this protein is ATP-dependent helicase Lhr-Core protein 2.